Consider the following 337-residue polypeptide: tRNA N6-adenosine threonylcarbamoyltransferase (337 aa).

2 residues coordinate Fe cation: His111 and His115. Substrate contacts are provided by residues 134 to 138 (LVSGG), Asp167, Gly180, and Asn272. Asp300 provides a ligand contact to Fe cation.

The protein belongs to the KAE1 / TsaD family. Fe(2+) serves as cofactor.

The protein resides in the cytoplasm. It carries out the reaction L-threonylcarbamoyladenylate + adenosine(37) in tRNA = N(6)-L-threonylcarbamoyladenosine(37) in tRNA + AMP + H(+). Its function is as follows. Required for the formation of a threonylcarbamoyl group on adenosine at position 37 (t(6)A37) in tRNAs that read codons beginning with adenine. Is involved in the transfer of the threonylcarbamoyl moiety of threonylcarbamoyl-AMP (TC-AMP) to the N6 group of A37, together with TsaE and TsaB. TsaD likely plays a direct catalytic role in this reaction. The polypeptide is tRNA N6-adenosine threonylcarbamoyltransferase (Escherichia coli O157:H7).